Consider the following 131-residue polypeptide: Small ribosomal subunit protein uS8 (131 aa).

It belongs to the universal ribosomal protein uS8 family. In terms of assembly, part of the 30S ribosomal subunit. Contacts proteins S5 and S12.

Functionally, one of the primary rRNA binding proteins, it binds directly to 16S rRNA central domain where it helps coordinate assembly of the platform of the 30S subunit. This Thermodesulfovibrio yellowstonii (strain ATCC 51303 / DSM 11347 / YP87) protein is Small ribosomal subunit protein uS8.